Consider the following 160-residue polypeptide: MSADANPDLKSADIGLIQQILPHRYPFLLVDKVVDIDGYQSARGIKNVTMNEPHFQGHFPGTPIMPGVTIVEAMAQTSGVMLGVGMDLIGTDMLIYFMNIDKCKFRRKVVPGDVLEMHVETVRGKPGGKIFKFSGRATVDGELAAEAEFTAMIDRDGKDG.

Histidine 58 is a catalytic residue.

This sequence belongs to the thioester dehydratase family. FabZ subfamily.

The protein resides in the cytoplasm. It carries out the reaction a (3R)-hydroxyacyl-[ACP] = a (2E)-enoyl-[ACP] + H2O. In terms of biological role, involved in unsaturated fatty acids biosynthesis. Catalyzes the dehydration of short chain beta-hydroxyacyl-ACPs and long chain saturated and unsaturated beta-hydroxyacyl-ACPs. The chain is 3-hydroxyacyl-[acyl-carrier-protein] dehydratase FabZ from Ruegeria sp. (strain TM1040) (Silicibacter sp.).